The chain runs to 212 residues: Glycerol-3-phosphate acyltransferase (212 aa).

5 helical membrane passes run 3-23, 51-71, 78-98, 115-135, and 139-159; these read ILLA…VVVS, KAAI…VWLA, DVAV…PVFF, AVHP…AFFF, and SLAA…LFGT.

Belongs to the PlsY family. Probably interacts with PlsX.

The protein localises to the cell inner membrane. The catalysed reaction is an acyl phosphate + sn-glycerol 3-phosphate = a 1-acyl-sn-glycero-3-phosphate + phosphate. The protein operates within lipid metabolism; phospholipid metabolism. In terms of biological role, catalyzes the transfer of an acyl group from acyl-phosphate (acyl-PO(4)) to glycerol-3-phosphate (G3P) to form lysophosphatidic acid (LPA). This enzyme utilizes acyl-phosphate as fatty acyl donor, but not acyl-CoA or acyl-ACP. The protein is Glycerol-3-phosphate acyltransferase of Burkholderia ambifaria (strain MC40-6).